We begin with the raw amino-acid sequence, 317 residues long: Ribose-phosphate pyrophosphokinase (317 aa).

ATP is bound by residues 43–45 and 102–103; these read DGE and RQ. Positions 106 and 110 each coordinate ADP. Residue histidine 136 participates in Mg(2+) binding. Residues glutamine 141 and 149–150 each bind ADP; that span reads DH. Position 175 (aspartate 175) interacts with Mg(2+). Lysine 198 is an active-site residue. D-ribose 5-phosphate-binding positions include arginine 200, aspartate 224, and 228–232; that span reads DTAGT. An ADP-binding site is contributed by 311–313; it reads SVS.

The protein belongs to the ribose-phosphate pyrophosphokinase family. Class I subfamily. As to quaternary structure, homohexamer; trimer of dimers. The cofactor is Mg(2+).

The protein localises to the cytoplasm. It catalyses the reaction D-ribose 5-phosphate + ATP = 5-phospho-alpha-D-ribose 1-diphosphate + AMP + H(+). It functions in the pathway metabolic intermediate biosynthesis; 5-phospho-alpha-D-ribose 1-diphosphate biosynthesis; 5-phospho-alpha-D-ribose 1-diphosphate from D-ribose 5-phosphate (route I): step 1/1. With respect to regulation, activated by inorganic phosphate, and to a lesser extent by sulfate ions. In addition to form a complex with ATP, Mg(2+) also acts as a cofactor. Strongly inhibited by ADP through competitive binding at the activation site and at a specific allosteric site. Less strongly inhibited by alpha,beta-methylene ATP (mADP), AMP, GDP, GMP and UTP. In terms of biological role, involved in the biosynthesis of the central metabolite phospho-alpha-D-ribosyl-1-pyrophosphate (PRPP) via the transfer of pyrophosphoryl group from ATP to 1-hydroxyl of ribose-5-phosphate (Rib-5-P). The protein is Ribose-phosphate pyrophosphokinase of Bacillus subtilis (strain 168).